The sequence spans 251 residues: Probable transcriptional regulatory protein cauri_1421 (251 aa).

The segment at 1 to 21 is disordered; that stretch reads MAGHSKWATTKHKKAANDAKR.

It belongs to the TACO1 family.

The protein localises to the cytoplasm. This is Probable transcriptional regulatory protein cauri_1421 from Corynebacterium aurimucosum (strain ATCC 700975 / DSM 44827 / CIP 107346 / CN-1) (Corynebacterium nigricans).